The sequence spans 206 residues: Large ribosomal subunit protein uL4 (206 aa).

Residues 44-87 (KRQGTQKAKTRSEVRGGGRKPWRQKGTGHARQGSTRSPQWTGGG) are disordered. Over residues 60 to 71 (GGRKPWRQKGTG) the composition is skewed to basic residues.

This sequence belongs to the universal ribosomal protein uL4 family. As to quaternary structure, part of the 50S ribosomal subunit.

One of the primary rRNA binding proteins, this protein initially binds near the 5'-end of the 23S rRNA. It is important during the early stages of 50S assembly. It makes multiple contacts with different domains of the 23S rRNA in the assembled 50S subunit and ribosome. Its function is as follows. Forms part of the polypeptide exit tunnel. The chain is Large ribosomal subunit protein uL4 from Agathobacter rectalis (strain ATCC 33656 / DSM 3377 / JCM 17463 / KCTC 5835 / VPI 0990) (Eubacterium rectale).